Reading from the N-terminus, the 105-residue chain is Small ribosomal subunit protein uS10 (105 aa).

This sequence belongs to the universal ribosomal protein uS10 family. Part of the 30S ribosomal subunit.

Its function is as follows. Involved in the binding of tRNA to the ribosomes. The chain is Small ribosomal subunit protein uS10 from Chlamydia abortus (strain DSM 27085 / S26/3) (Chlamydophila abortus).